The sequence spans 32 residues: Conotoxin pr6d (32 aa).

At Pro5 the chain carries 4-hydroxyproline. Disulfide bonds link Cys7/Cys20, Cys14/Cys25, and Cys19/Cys30.

As to expression, expressed by the venom duct.

It is found in the secreted. This chain is Conotoxin pr6d, found in Conus parius (Cone snail).